The following is an 842-amino-acid chain: Pentatricopeptide repeat-containing protein At3g23020 (842 aa).

A disordered region spans residues 40–61 (YVPGTHESDKGPQRSTRNGDRG). Residues 45–59 (HESDKGPQRSTRNGD) show a composition bias toward basic and acidic residues. PPR repeat units follow at residues 186-220 (NVIH…GIKP), 221-255 (INST…GMQP), 256-290 (DEVT…ENKA), 297-331 (SSYT…GIVP), 332-362 (TTVT…MKLH), 366-400 (DTRT…GLKP), 401-435 (DPVS…NVEI), 436-470 (DEYT…GNMS), 474-500 (YSAN…CQEV), 504-538 (TVIE…GVTP), 539-573 (DKCT…GYVS), 574-608 (DCIP…NIEP), 609-643 (DVVV…GIPG), 644-674 (NSVI…LLQS), 682-712 (DVYT…MKQR), 716-750 (NEFT…KILT), 751-785 (DPLS…GIQP), and 786-820 (DDST…EIKR).

It belongs to the PPR family. P subfamily.

The protein is Pentatricopeptide repeat-containing protein At3g23020 of Arabidopsis thaliana (Mouse-ear cress).